The chain runs to 122 residues: Holo-[acyl-carrier-protein] synthase (122 aa).

2 residues coordinate Mg(2+): Asp8 and Glu55.

Belongs to the P-Pant transferase superfamily. AcpS family. The cofactor is Mg(2+).

Its subcellular location is the cytoplasm. The enzyme catalyses apo-[ACP] + CoA = holo-[ACP] + adenosine 3',5'-bisphosphate + H(+). Functionally, transfers the 4'-phosphopantetheine moiety from coenzyme A to a Ser of acyl-carrier-protein. The protein is Holo-[acyl-carrier-protein] synthase of Fusobacterium nucleatum subsp. nucleatum (strain ATCC 25586 / DSM 15643 / BCRC 10681 / CIP 101130 / JCM 8532 / KCTC 2640 / LMG 13131 / VPI 4355).